A 377-amino-acid polypeptide reads, in one-letter code: Aspartate aminotransferase (377 aa).

The L-aspartate site is built by Gly-37, Trp-123, and Asn-173. Lys-234 is modified (N6-(pyridoxal phosphate)lysine). Arg-353 is an L-aspartate binding site.

The protein belongs to the class-I pyridoxal-phosphate-dependent aminotransferase family. As to quaternary structure, homodimer. Requires pyridoxal 5'-phosphate as cofactor.

The protein resides in the cytoplasm. The enzyme catalyses L-aspartate + 2-oxoglutarate = oxaloacetate + L-glutamate. The chain is Aspartate aminotransferase (aspC) from Thermotoga maritima (strain ATCC 43589 / DSM 3109 / JCM 10099 / NBRC 100826 / MSB8).